Reading from the N-terminus, the 852-residue chain is Probable LRR receptor-like serine/threonine-protein kinase At1g05700 (852 aa).

Residues M1–A25 form the signal peptide. Topologically, residues Q26–L510 are extracellular. N-linked (GlcNAc...) asparagine glycosylation is found at N138, N182, N231, N240, N258, N293, N400, N415, and N431. 3 LRR repeats span residues R410–L432, M434–K457, and F458–E479. N-linked (GlcNAc...) asparagine glycosylation is present at N466. The chain crosses the membrane as a helical span at residues V511–F531. The Cytoplasmic portion of the chain corresponds to W532–Y852. At T561 the chain carries Phosphothreonine. The 274-residue stretch at N570 to L843 folds into the Protein kinase domain. ATP is bound by residues L576–V584 and K597. Y642 bears the Phosphotyrosine mark. D693 serves as the catalytic Proton acceptor. Residues S697 and S727 each carry the phosphoserine modification. Phosphothreonine occurs at positions 728 and 733.

This sequence belongs to the protein kinase superfamily. Ser/Thr protein kinase family.

It localises to the membrane. It catalyses the reaction L-seryl-[protein] + ATP = O-phospho-L-seryl-[protein] + ADP + H(+). The catalysed reaction is L-threonyl-[protein] + ATP = O-phospho-L-threonyl-[protein] + ADP + H(+). This is Probable LRR receptor-like serine/threonine-protein kinase At1g05700 from Arabidopsis thaliana (Mouse-ear cress).